The sequence spans 203 residues: Small ribosomal subunit protein uS7 (203 aa).

The interval 1–21 (MSSEAPEPDAPASTDDERVSA) is disordered.

This sequence belongs to the universal ribosomal protein uS7 family. In terms of assembly, part of the 30S ribosomal subunit.

Functionally, one of the primary rRNA binding proteins, it binds directly to 16S rRNA where it nucleates assembly of the head domain of the 30S subunit. Is located at the subunit interface close to the decoding center. This chain is Small ribosomal subunit protein uS7, found in Natronomonas pharaonis (strain ATCC 35678 / DSM 2160 / CIP 103997 / JCM 8858 / NBRC 14720 / NCIMB 2260 / Gabara) (Halobacterium pharaonis).